The primary structure comprises 92 residues: Transcription factor PRE4 (92 aa).

Positions 5–60 (KSRSRQTGASMITDEQINDLVLQLHRLLPELANNRRSGKVSASRVLQETCSYIRNL) constitute a bHLH domain.

This sequence belongs to the bHLH protein family. Interacts with HFR1 and IBH1. Expressed in roots, leaves, stems and flowers.

It is found in the nucleus. Functionally, atypical and probable non DNA-binding bHLH transcription factor that integrates multiple signaling pathways to regulate cell elongation and plant development. Regulates light responses by binding and inhibiting the activity of the bHLH transcription factor HFR1, a critical regulator of light signaling and shade avoidance. May have a regulatory role in various aspects of gibberellin-dependent growth and development. This chain is Transcription factor PRE4 (PRE4), found in Arabidopsis thaliana (Mouse-ear cress).